The chain runs to 140 residues: ATP synthase epsilon chain (140 aa).

The protein belongs to the ATPase epsilon chain family. In terms of assembly, F-type ATPases have 2 components, CF(1) - the catalytic core - and CF(0) - the membrane proton channel. CF(1) has five subunits: alpha(3), beta(3), gamma(1), delta(1), epsilon(1). CF(0) has three main subunits: a, b and c.

The protein resides in the cell inner membrane. Functionally, produces ATP from ADP in the presence of a proton gradient across the membrane. The polypeptide is ATP synthase epsilon chain (Sodalis glossinidius (strain morsitans)).